Here is a 130-residue protein sequence, read N- to C-terminus: NADH-quinone oxidoreductase subunit A (130 aa).

A run of 3 helical transmembrane segments spans residues 17-37 (YIFV…MLAL), 74-94 (LVGI…PWAV), and 99-119 (LGPA…VGFV).

Belongs to the complex I subunit 3 family. As to quaternary structure, NDH-1 is composed of 14 different subunits. Subunits NuoA, H, J, K, L, M, N constitute the membrane sector of the complex.

The protein localises to the cell inner membrane. The catalysed reaction is a quinone + NADH + 5 H(+)(in) = a quinol + NAD(+) + 4 H(+)(out). Its function is as follows. NDH-1 shuttles electrons from NADH, via FMN and iron-sulfur (Fe-S) centers, to quinones in the respiratory chain. The immediate electron acceptor for the enzyme in this species is believed to be ubiquinone. Couples the redox reaction to proton translocation (for every two electrons transferred, four hydrogen ions are translocated across the cytoplasmic membrane), and thus conserves the redox energy in a proton gradient. The polypeptide is NADH-quinone oxidoreductase subunit A (Neorickettsia sennetsu (strain ATCC VR-367 / Miyayama) (Ehrlichia sennetsu)).